The following is a 172-amino-acid chain: MRHKKAGRQFGRDTSSRRAMLRNLTANLITHERIETTDAKAKELRRVAERLITKATRLGKVAYTAHGELSPGDRARRLHAERLVGSYIPRWGVATDGKKVDIIAKVMIDLSKRFEGRPGGYTRIIKLGPRRGDCAQMSLIEFIDAPPVADAPAQAAEPVAAAEPATPATTAG.

Residues 153 to 172 (AQAAEPVAAAEPATPATTAG) are disordered.

Belongs to the bacterial ribosomal protein bL17 family. As to quaternary structure, part of the 50S ribosomal subunit. Contacts protein L32.

This chain is Large ribosomal subunit protein bL17, found in Sorangium cellulosum (strain So ce56) (Polyangium cellulosum (strain So ce56)).